Consider the following 399-residue polypeptide: CLOCK-interacting pacemaker (399 aa).

Positions 1–12 (MERKNSSRESPR) are enriched in basic and acidic residues. Disordered regions lie at residues 1–85 (MERK…AKNA) and 159–224 (SYTK…KLAE). Residue Ser-213 is modified to Phosphoserine. A coiled-coil region spans residues 333 to 359 (TLKTKELIRQNQATQVELDQLKEQTQL). Residues 378 to 388 (SLTPGSSNTGS) are compositionally biased toward polar residues. The segment at 378–399 (SLTPGSSNTGSDLEAFSDHPDI) is disordered.

In terms of assembly, interacts with CLOCK. Forms a ternary complex with the CLOCK-BMAL1 heterodimer. Interacts with CAD and HSPA5.

The protein localises to the nucleus. It is found in the cytoplasm. It localises to the cytosol. Transcriptional repressor which may act as a negative-feedback regulator of CLOCK-BMAL1 transcriptional activity in the circadian-clock mechanism. May stimulate BMAL1-dependent phosphorylation of CLOCK. However, the physiological relevance of these observations is unsure, since experiments in knockout mice showed that CIPC is not critially required for basic circadian clock. The sequence is that of CLOCK-interacting pacemaker (CIPC) from Pongo abelii (Sumatran orangutan).